The following is a 199-amino-acid chain: Securin (199 aa).

Disordered stretches follow at residues 1-23 and 58-108; these read MATLIFVDKDNEEPGSRLASKDG and RKAL…DDAY. N-acetylalanine is present on alanine 2. Positions 7 to 23 are enriched in basic and acidic residues; the sequence is VDKDNEEPGSRLASKDG. The short motif at 58–61 is the D-box element; sequence RKAL. The TEK-box 1 motif lies at 68 to 70; the sequence is TEK. The segment covering 76 to 85 has biased composition (polar residues); the sequence is KPLQSKQPTL. Residues 91–93 carry the TEK-box 2 motif; the sequence is TEK. The residue at position 162 (serine 162) is a Phosphoserine. The SH3-binding signature appears at 179–192; the sequence is PPSALSALDVELPP.

This sequence belongs to the securin family. In terms of assembly, interacts with the caspase-like ESPL1, and prevents its protease activity by covering its active site. Interacts with p53/TP53 and blocks its activity probably by blocking its binding to DNA. Interacts with the Ku 70 kDa subunit of ds-DNA kinase. Interacts with PTTG1IP. Interacts with RPS10 and DNAJA1. In terms of processing, phosphorylated at Ser-162 by CDK1 during mitosis. Phosphorylated in vitro by ds-DNA kinase. Post-translationally, ubiquitinated through 'Lys-11' linkage of ubiquitin moieties by the anaphase promoting complex (APC) at the onset of anaphase, conducting to its degradation. 'Lys-11'-linked ubiquitination is mediated by the E2 ligase UBE2C/UBCH10. As to expression, expressed at low level in most tissues, except in adult testis, where it is highly expressed. Expressed in both spermatocytes and spermatids.

Its subcellular location is the cytoplasm. It is found in the nucleus. Its function is as follows. Regulatory protein, which plays a central role in chromosome stability, in the p53/TP53 pathway, and DNA repair. Probably acts by blocking the action of key proteins. During the mitosis, it blocks Separase/ESPL1 function, preventing the proteolysis of the cohesin complex and the subsequent segregation of the chromosomes. At the onset of anaphase, it is ubiquitinated, conducting to its destruction and to the liberation of ESPL1. Its function is however not limited to a blocking activity, since it is required to activate ESPL1. Negatively regulates the transcriptional activity and related apoptosis activity of p53/TP53. The negative regulation of p53/TP53 may explain the strong transforming capability of the protein when it is overexpressed. May also play a role in DNA repair via its interaction with Ku, possibly by connecting DNA damage-response pathways with sister chromatid separation. This Rattus norvegicus (Rat) protein is Securin (Pttg1).